The sequence spans 232 residues: Small ribosomal subunit protein uS3 (232 aa).

In terms of domain architecture, KH type-2 spans 39-107; the sequence is VRQFLTSELK…PAQINIAEVR (69 aa). The interval 213–232 is disordered; sequence AANAVEPKGDKPKKQRKGRK.

This sequence belongs to the universal ribosomal protein uS3 family. In terms of assembly, part of the 30S ribosomal subunit. Forms a tight complex with proteins S10 and S14.

Functionally, binds the lower part of the 30S subunit head. Binds mRNA in the 70S ribosome, positioning it for translation. The sequence is that of Small ribosomal subunit protein uS3 from Vibrio parahaemolyticus serotype O3:K6 (strain RIMD 2210633).